A 129-amino-acid chain; its full sequence is GM1b/asialo-GM1 oligosaccharide-binding R-type lectin (129 aa).

Residues 21-23 (FYN), 26-28 (RKD), phenylalanine 32, and 37-40 (YDDQ) contribute to the a carbohydrate site.

In terms of assembly, homodimer. Highest expression in the outer part of the mantle rim. Highly expressed in gills, with a much lower expression in the digestive gland and posterior adductor muscle. Scarcely detectable in foot.

Hemagglutination activity requires divalent cations such as Ca(2+). Hemagglutination activity is weakly inhibited by monosaccharides such as D-Gal (25 mM), D-GalNAc (25 mM) and D-Fuc (25 mM) and by disaccharides such as melibiose (25 mM) and lactose (25 mM). Hemagglutination activity is inhibited by bovine submaxillary mucin, but not by porcine stomach mucin or fetuin. Its function is as follows. Galbeta1-3GalNAcbeta1-4Galbeta1-4Glc oligosaccharide-binding lectin. Binds strongly to the oligosaccharides of ganglioside GM1b and to a lesser extent its precursor asialo-GM1. Binds weakly to asialo-GM2 oligosaccharide and to the glycan moiety of globo-series stage-specific embryonal antigen 4 (SSEA-4) hexaose. Binds galactose, N-acetylgalactose and lactose. Does not bind GM1. Does not bind to Gal-beta1,3-GalNAc (Thomsen-Friedenreich antigen), the oligosaccharide of GM1a ganglioside or SSEA-4 tetraose. Does not bind to N-glycans, O-glycans or glycosaminoglycans of glycoproteins. Does not bind Lewis glycans, derivatives of lactose or N-acetyllactosamine or blood group (ABH-type) oligosaccharides. Does not bind glucose. Has hemagglutination activity towards rabbit erythrocytes. Displays cytotoxic effects against various cultured cell lines including human breast (MCF-7), cervical (HeLa) and colon cancer (Caco2) cell lines, as well as dog kidney (MDCK) cell line that express asialo-GM1 oligosaccharide at their cell surface. Shows dose- and time-dependent activation of MKK3/6, ERK1/2 and p38 MAPK, as well as caspase-3/9 in HeLa cervical cancer cells. No cytotoxic effect on BT474 human breast cancer cell line. May be involved in recognition of glycans found on parasitic or symbiotic microorganisms. The chain is GM1b/asialo-GM1 oligosaccharide-binding R-type lectin from Mytilisepta virgata (Purplish bifurcate mussel).